The sequence spans 612 residues: MFS siderochrome iron transporter B (612 aa).

Over 1–86 (MLHVLSVGPS…GAQAGVKKIE (86 aa)) the chain is Cytoplasmic. The tract at residues 55-78 (DKEAAHAPANAETNNEEANPSDGA) is disordered. Residues 60-72 (HAPANAETNNEEA) show a composition bias toward low complexity. The helical transmembrane segment at 87-104 (AVTLSWTRGTAIWFLTLV) threads the bilayer. Residues 105 to 127 (NDFRLSMYTSLNAYATSSFLGHS) lie on the Extracellular side of the membrane. The helical transmembrane segment at 128-148 (LLTVINIVSYVMGGSVYIPMA) threads the bilayer. Residues 149–156 (KALDLWGR) are Cytoplasmic-facing. Residues 157 to 177 (AEGFLLMTFFCILGLILLASS) traverse the membrane as a helical segment. Topologically, residues 178 to 187 (QNLPTYCAGQ) are extracellular. The chain crosses the membrane as a helical span at residues 188 to 208 (VFYKVGFGGLSYTWNVLAADV). At 209 to 215 (TNLRNRG) the chain is on the cytoplasmic side. A helical transmembrane segment spans residues 216 to 236 (LAFAFTSSPALISAFAGSKAA). Residues 237-246 (SDLLAHSTWR) lie on the Extracellular side of the membrane. A helical transmembrane segment spans residues 247–267 (WGFGMWAIILPVVALPIYGLL). The Cytoplasmic segment spans residues 268–302 (AYHLRQAEKKGVLVKETRDWSITPKTVWWAIMEFD). The chain crosses the membrane as a helical span at residues 303-323 (LPGVLLFAGGFVIFLLPFTLA). The Extracellular segment spans residues 324–334 (ATAPHGYQTDY). A helical membrane pass occupies residues 335 to 355 (IIAMITLGLALIIAFGFYEML). The Cytoplasmic segment spans residues 356-370 (VAPVPFLNYKFLIDR). The helical transmembrane segment at 371–393 (TVLGACLLDMTYQVSYYCYASYL) threads the bilayer. At 394-409 (PSFLQVVYELDVATAG) the chain is on the extracellular side. Residues 410–430 (YVTNTFSVVSFVFLFFAGWLI) traverse the membrane as a helical segment. The Cytoplasmic portion of the chain corresponds to 431-435 (RWTGR). A helical membrane pass occupies residues 436-456 (FKWILWVCVPLYIFGLGLMIH). Residues 457–463 (FRQPGGY) are Extracellular-facing. The helical transmembrane segment at 464-484 (IGYIVMCEIFFSVAGSVFILC) threads the bilayer. At 485–498 (VQLAVLASVDHQHV) the chain is on the cytoplasmic side. The chain crosses the membrane as a helical span at residues 499–519 (AAVLALLFVMGSIGGSIGSAI). Over 520–575 (CGAIWTSTFLSRLERNLPASAMPDLSLIYSSLPTQLSYPVGSATRTAIVEAYGYAQ) the chain is Extracellular. Residues 576-596 (ARMLIAGTAFMVLGFIWVGMM) form a helical membrane-spanning segment. Over 597 to 612 (RNLNVKNMTQTKGNVV) the chain is Cytoplasmic.

Belongs to the major facilitator superfamily.

The protein localises to the cell tip. The protein resides in the cytoplasmic vesicle membrane. It is found in the cell membrane. Functionally, major facilitator transporter involved in triacetylfusarinine C (TAFC) uptake. Can also transport ferricrocin and coprogen, but not ferrichrysin. MirB plays a crucial role for virulence in a murine model of pulmonary aspergillosis, indicating that TAFC-mediated iron uptake plays a dominant role during infection. This is MFS siderochrome iron transporter B from Aspergillus fumigatus (strain ATCC MYA-4609 / CBS 101355 / FGSC A1100 / Af293) (Neosartorya fumigata).